Here is a 762-residue protein sequence, read N- to C-terminus: Coleoptile phototropism protein 1 (762 aa).

Residues 1–12 show a composition bias toward basic and acidic residues; sequence MWESESESHGGE. A disordered region spans residues 1-29; the sequence is MWESESESHGGERGLVPVGGGGGSGRHEA. Positions 51-128 constitute a BTB domain; the sequence is SDLLVKVGDV…SYGMAVDLTA (78 aa). Positions 227–238 are enriched in gly residues; sequence PAAIRGGGGSGG. Disordered regions lie at residues 227–264, 460–495, 687–718, and 731–762; these read PAAIRGGGGSGGTASPRWNVGGGGGGESKESSPSRQAV, MAVASSPGRGDPPPPPQPEYYSGRMPPSSAAAASAS, QVDGRGGGAPSPAAAKIGKQQQQGTSASAWSS, and GADAAAGGGVAPPGGGEAAARKGPRRWRNSIS. The region spanning 268 to 607 is the NPH3 domain; the sequence is DWWFEDVSVL…VQVLFTEQVK (340 aa). The stretch at 654–691 forms a coiled coil; it reads AAAKKDINTLKFELESMKAKYLELQHEMDALQKQVDGR. A compositionally biased stretch (low complexity) spans 696–709; sequence PSPAAAKIGKQQQQ. Residues 736-747 show a composition bias toward gly residues; sequence AGGGVAPPGGGE. Over residues 752–762 the composition is skewed to basic residues; it reads KGPRRWRNSIS.

This sequence belongs to the NPH3 family.

The protein operates within protein modification; protein ubiquitination. In terms of biological role, may act as a substrate-specific adapter of an E3 ubiquitin-protein ligase complex (CUL3-RBX1-BTB) which mediates the ubiquitination and subsequent proteasomal degradation of target proteins. Plays a role as signal transduction component in coleoptile phototropism and lateral translocation of auxin. In Oryza sativa subsp. japonica (Rice), this protein is Coleoptile phototropism protein 1 (CPT1).